The following is a 104-amino-acid chain: Large ribosomal subunit protein uL24 (104 aa).

It belongs to the universal ribosomal protein uL24 family. As to quaternary structure, part of the 50S ribosomal subunit.

In terms of biological role, one of two assembly initiator proteins, it binds directly to the 5'-end of the 23S rRNA, where it nucleates assembly of the 50S subunit. One of the proteins that surrounds the polypeptide exit tunnel on the outside of the subunit. The protein is Large ribosomal subunit protein uL24 of Corynebacterium jeikeium (strain K411).